The primary structure comprises 309 residues: Olfactory receptor 10J5 (309 aa).

Topologically, residues 1–25 (MKRKNFTEVSEFIFLGFSSFGKHQI) are extracellular. The N-linked (GlcNAc...) asparagine glycan is linked to asparagine 5. Residues 26–46 (TLFVVFLTVYILTLVANIIIV) form a helical membrane-spanning segment. The Cytoplasmic portion of the chain corresponds to 47–54 (TIICIDHH). A helical membrane pass occupies residues 55–75 (LHTPMYFFLSMLASSETVYTL). The Extracellular segment spans residues 76 to 99 (VIVPRMLLSLIFHNQPISLAGCAT). A disulfide bond links cysteine 97 and cysteine 188. Residues 100 to 120 (QMFFFVILATNNCFLLTAMGY) form a helical membrane-spanning segment. At 121 to 139 (DRYVAICRPLRYTVIMSKG) the chain is on the cytoplasmic side. The helical transmembrane segment at 140-160 (LCAQLVCGSFGIGLTMAVLHV) threads the bilayer. The Extracellular segment spans residues 161–196 (TAMFNLPFCGTVVDHFFCDIYPVMKLSCIDTTINEI). The helical transmembrane segment at 197–216 (INYGVSSFVIFVPIGLIFIS) threads the bilayer. Over 217–236 (YVLVISSILQIASAEGRKKT) the chain is Cytoplasmic. The chain crosses the membrane as a helical span at residues 237–257 (FATCVSHLTVVIVHCGCASIA). The Extracellular segment spans residues 258-270 (YLKPKSESSIEKD). A helical transmembrane segment spans residues 271–291 (LVLSVTYTIITPLLNPVVYSL). Residues 292–309 (RNKEVKDALCRVVGRNIS) lie on the Cytoplasmic side of the membrane.

It belongs to the G-protein coupled receptor 1 family. As to expression, expressed in both the aorta, the coronary artery and umbilical vein endothelial cells (HUVECs) (at protein level).

It is found in the cell membrane. Its function is as follows. Olfactory receptor. Activated by the synthetic floral odorant, lyral, and by alpha-cedrene, a sesquiterpene constituent of cedarwood oil. Its activation increases intracellular Ca(2+). Acts as a key regulator of myogenesis through its actions on cell migration and adhesion by activating the Ca(2+)-dependent AKT signal transduction pathway. Also acts as a regulator of angiogenesis. Moreover, plays a role in the regulation of lipid accumulation in hepatocytes via the cAMP-PKA pathway. May be involved in sperm chemotaxis and motility. The polypeptide is Olfactory receptor 10J5 (Homo sapiens (Human)).